The primary structure comprises 424 residues: UDP-N-acetylglucosamine 1-carboxyvinyltransferase (424 aa).

Phosphoenolpyruvate is bound at residue 22 to 23 (KN). Arg-93 is a UDP-N-acetyl-alpha-D-glucosamine binding site. The Proton donor role is filled by Cys-117. Cys-117 is subject to 2-(S-cysteinyl)pyruvic acid O-phosphothioketal. Residues 122–126 (RPVDL), 162–165 (KVSV), Asp-307, and Ile-329 each bind UDP-N-acetyl-alpha-D-glucosamine.

This sequence belongs to the EPSP synthase family. MurA subfamily.

It is found in the cytoplasm. The catalysed reaction is phosphoenolpyruvate + UDP-N-acetyl-alpha-D-glucosamine = UDP-N-acetyl-3-O-(1-carboxyvinyl)-alpha-D-glucosamine + phosphate. It participates in cell wall biogenesis; peptidoglycan biosynthesis. Its function is as follows. Cell wall formation. Adds enolpyruvyl to UDP-N-acetylglucosamine. This is UDP-N-acetylglucosamine 1-carboxyvinyltransferase from Haemophilus influenzae (strain 86-028NP).